The following is a 111-amino-acid chain: Ribulose bisphosphate carboxylase small subunit (111 aa).

The protein belongs to the RuBisCO small chain family. In terms of assembly, heterohexadecamer of 8 large and 8 small subunits. The CcmM short form purifies from carboxysomes in complex with both RuBisCO subunits; a second complex with full-length CcmM and RuBisCO also includes carbonic anhydrase (CA, ccaA). RuBisCO-CcmM complexes are probably associated with the carboxysome shell. Isolated reduced and oxidized SSUL1 binds holo-RuBisCO (RbcL(8)-RbcS(8)) but not either subunit octamer alone; RuBisCO has a higher affinity for reduced SSUL1.

It localises to the carboxysome. RuBisCO catalyzes two reactions: the carboxylation of D-ribulose 1,5-bisphosphate, the primary event in carbon dioxide fixation, as well as the oxidative fragmentation of the pentose substrate in the photorespiration process. Both reactions occur simultaneously and in competition at the same active site. Functionally, beta-carboxysome assembly initiates when soluble RuBisCO aggregates is condensed into a liquid matrix in a pre-carboxysome by the RbcS-like domains of probably both CcmM58 and CcmM35. CcmN interacts with the N-terminus of CcmM58, and then recruits the CcmK2 major shell protein via CcmN's encapsulation peptide. Shell formation requires CcmK proteins and CcmO. CcmL caps the otherwise elongated carboxysome. Once fully encapsulated carboxysomes are formed, they migrate within the cell probably via interactions with the cytoskeleton. In Synechococcus elongatus (strain ATCC 33912 / PCC 7942 / FACHB-805) (Anacystis nidulans R2), this protein is Ribulose bisphosphate carboxylase small subunit.